The sequence spans 3063 residues: Collagen alpha-1(XII) chain (3063 aa).

The signal sequence occupies residues 1-23 (MRSRLPPALAALGAALLLSSIEA). In terms of domain architecture, Fibronectin type-III 1 spans 27–117 (PPSDLNFKII…GQLTIQTGSS (91 aa)). Residues 140-316 (DLVFLVDGSW…DIQNEIISQV (177 aa)) form the VWFA 1 domain. A glycan (O-linked (Xyl...) (chondroitin sulfate) serine) is linked at serine 329. In terms of domain architecture, Fibronectin type-III 2 spans 336–426 (PPSNLIAMEV…SIMEKTQPMK (91 aa)). The region spanning 440 to 616 (DIVFLVDGSY…RISFELTQSI (177 aa)) is the VWFA 2 domain. Fibronectin type-III domains lie at 634-722 (PPKD…TEEV), 725-816 (APRN…VRGN), 817-905 (PRDL…LEER), 907-998 (SPQD…LSQD), 999-1087 (SKTL…ASRF), and 1089-1179 (SPRN…TLSD). Asparagine 700 carries N-linked (GlcNAc...) asparagine glycosylation. Serine 798 is a glycosylation site (O-linked (Xyl...) (chondroitin sulfate) serine). A disordered region spans residues 799–830 (GPGTPLTGNAATEEVRGNPRDLRVSDPTTSTM). Residues 811 to 822 (EEVRGNPRDLRV) are compositionally biased toward basic and acidic residues. A Cell attachment site motif is present at residues 862–864 (RGD). Residues serine 889 and serine 981 are each glycosylated (O-linked (Xyl...) (chondroitin sulfate) serine). The disordered stretch occupies residues 1077 to 1099 (RQGSGTTASRFKSPRNLKTSDPT). A compositionally biased stretch (polar residues) spans 1079 to 1099 (GSGTTASRFKSPRNLKTSDPT). Residues 1199–1371 (DIVLLVDGSW…ESLSRIVDDL (173 aa)) enclose the VWFA 3 domain. Fibronectin type-III domains follow at residues 1387-1476 (APSN…LPVP), 1477-1567 (VVSL…LPLP), 1568-1658 (RPQD…VPAP), 1659-1754 (TNLK…APKS), 1755-1849 (GPRN…TVRN), 1850-1935 (LRVY…LMRG), 1936-2026 (LARN…LPRS), 2027-2117 (GPRN…VGLL), 2118-2206 (PPQN…LYLN), and 2207-2294 (VTDL…TVKP). A glycan (N-linked (GlcNAc...) asparagine) is linked at asparagine 1763. The N-linked (GlcNAc...) asparagine glycan is linked to asparagine 2206. The disordered stretch occupies residues 2283-2312 (GVSVKEHTTVKPTEAPTEPPTPPPPPTIPP). Positions 2299-2311 (TEPPTPPPPPTIP) are enriched in pro residues. Residues 2323-2496 (DIVFLTDASW…ESFEKIEDNL (174 aa)) enclose the VWFA 4 domain. The tract at residues 2451-2746 (SGFSVFVVGV…NSCTCTQDSV (296 aa)) is nonhelical region (NC3). In terms of domain architecture, Laminin G-like spans 2520–2712 (GFKMLEAYNL…IQSFDIVCSP (193 aa)). N-linked (GlcNAc...) asparagine glycans are attached at residues asparagine 2528 and asparagine 2679. Disordered regions lie at residues 2743–2896 (QDSV…GDRG) and 2932–3063 (NDYQ…PGSG). Collagen-like domains follow at residues 2747–2798 (GPPG…GPNG), 2802–2852 (PGEQ…AMGP), 2853–2898 (RGPP…RGDI), and 2941–2990 (PGPP…GERG). The triple-helical region (COL2) with 1 imperfection stretch occupies residues 2747-2898 (GPPGPPGPAG…KGEKGDRGDI (152 aa)). A Cell attachment site motif is present at residues 2779-2781 (RGD). Residues 2784–2794 (PPGPQGPPGPQ) are compositionally biased toward pro residues. Residues 2817–2826 (PGLPGRTGTP) show a composition bias toward low complexity. 2 stretches are compositionally biased toward pro residues: residues 2828 to 2837 (LPGPPGPMGP) and 2853 to 2862 (RGPPGPPGSP). The segment covering 2864-2874 (SPGVTGPSGKP) has biased composition (low complexity). Positions 2895–2897 (RGD) match the Cell attachment site motif. Positions 2899–2941 (ASQNMMRAVARQVCEQLISGQMNRFNQMLNQIPNDYQSSRNQP) are nonhelical region (NC2). Positions 2941–2950 (PGPPGPPGPP) are enriched in pro residues. The interval 2942–3044 (GPPGPPGPPG…RGPPGPPGYC (103 aa)) is triple-helical region (COL1) with 2 imperfections. 4-hydroxyproline occurs at positions 2944, 2947, 2950, 2959, 2965, 2968, 2971, 2983, 3000, 3003, 3014, 3023, 3026, and 3029. The segment covering 2957-2966 (GEPGPGGRPG) has biased composition (gly residues). A compositionally biased stretch (low complexity) spans 3006 to 3020 (QGESRTGPPGSTGSR). The segment at 3045–3063 (DSSQCASIPYNGQGYPGSG) is nonhelical region (NC1).

The protein belongs to the fibril-associated collagens with interrupted helices (FACIT) family. In terms of assembly, trimer of identical chains each containing 190 kDa of non-triple-helical sequences. Post-translationally, the triple-helical tail is stabilized by disulfide bonds at each end. In terms of processing, hydroxylation on proline residues within the sequence motif, GXPG, is most likely to be 4-hydroxy as this fits the requirement for 4-hydroxylation in vertebrates. Isoform 1 O-glycosylation; glycosaminoglycan of chondroitin-sulfate type. Found in collagen I-containing tissues: both isoform 1 and isoform 2 appear in amnion, chorion, skeletal muscle, small intestine, and in cell culture of dermal fibroblasts, keratinocytes and endothelial cells. Only isoform 2 is found in lung, placenta, kidney and a squamous cell carcinoma cell line. Isoform 1 is also present in the corneal epithelial Bowman's membrane (BM) and the interfibrillar matrix of the corneal stroma, but it is not detected in the limbal BM.

The protein localises to the secreted. It localises to the extracellular space. Its subcellular location is the extracellular matrix. In terms of biological role, type XII collagen interacts with type I collagen-containing fibrils, the COL1 domain could be associated with the surface of the fibrils, and the COL2 and NC3 domains may be localized in the perifibrillar matrix. This Homo sapiens (Human) protein is Collagen alpha-1(XII) chain (COL12A1).